The primary structure comprises 396 residues: Phosphoglycerate kinase (396 aa).

Substrate is bound by residues 21–23 (DFN), Arg37, 60–63 (HLGR), Arg121, and Arg154. Residues Lys205, Gly296, Glu327, and 353–356 (GGDS) contribute to the ATP site.

This sequence belongs to the phosphoglycerate kinase family. Monomer.

The protein localises to the cytoplasm. It carries out the reaction (2R)-3-phosphoglycerate + ATP = (2R)-3-phospho-glyceroyl phosphate + ADP. Its pathway is carbohydrate degradation; glycolysis; pyruvate from D-glyceraldehyde 3-phosphate: step 2/5. This is Phosphoglycerate kinase from Anaeromyxobacter dehalogenans (strain 2CP-C).